A 139-amino-acid chain; its full sequence is Endoribonuclease YbeY (139 aa).

Zn(2+) contacts are provided by His-105, His-109, and Asp-115.

It belongs to the endoribonuclease YbeY family. It depends on Zn(2+) as a cofactor.

Its subcellular location is the cytoplasm. Functionally, single strand-specific metallo-endoribonuclease involved in late-stage 70S ribosome quality control and in maturation of the 3' terminus of the 16S rRNA. The chain is Endoribonuclease YbeY from Flavobacterium johnsoniae (strain ATCC 17061 / DSM 2064 / JCM 8514 / BCRC 14874 / CCUG 350202 / NBRC 14942 / NCIMB 11054 / UW101) (Cytophaga johnsonae).